The sequence spans 464 residues: ATP synthase subunit beta (464 aa).

153-160 contributes to the ATP binding site; it reads GGAGVGKT.

The protein belongs to the ATPase alpha/beta chains family. F-type ATPases have 2 components, CF(1) - the catalytic core - and CF(0) - the membrane proton channel. CF(1) has five subunits: alpha(3), beta(3), gamma(1), delta(1), epsilon(1). CF(0) has three main subunits: a(1), b(2) and c(9-12). The alpha and beta chains form an alternating ring which encloses part of the gamma chain. CF(1) is attached to CF(0) by a central stalk formed by the gamma and epsilon chains, while a peripheral stalk is formed by the delta and b chains.

It localises to the cell membrane. It catalyses the reaction ATP + H2O + 4 H(+)(in) = ADP + phosphate + 5 H(+)(out). Produces ATP from ADP in the presence of a proton gradient across the membrane. The catalytic sites are hosted primarily by the beta subunits. The protein is ATP synthase subunit beta of Clostridium novyi (strain NT).